A 116-amino-acid chain; its full sequence is G antigen 2B/2C (116 aa).

A disordered region spans residues 1 to 116 (MSWRGRSTYR…PEEGEKQSQC (116 aa)). Acidic residues-rich tracts occupy residues 31 to 44 (FSDEVEPATPEEGE) and 86 to 95 (ECEDGPDGQE). Residues 102-116 (EEVKTPEEGEKQSQC) are compositionally biased toward basic and acidic residues.

The protein belongs to the GAGE family. Expressed in a variety of tumor tissues but not in normal tissues, except testis.

Functionally, antigen, recognized on melanoma by autologous cytolytic T-lymphocytes. The polypeptide is G antigen 2B/2C (GAGE2B) (Homo sapiens (Human)).